Reading from the N-terminus, the 317-residue chain is UDP-3-O-acylglucosamine N-acyltransferase (317 aa).

His-229 serves as the catalytic Proton acceptor.

This sequence belongs to the transferase hexapeptide repeat family. LpxD subfamily. Homotrimer.

The catalysed reaction is a UDP-3-O-[(3R)-3-hydroxyacyl]-alpha-D-glucosamine + a (3R)-hydroxyacyl-[ACP] = a UDP-2-N,3-O-bis[(3R)-3-hydroxyacyl]-alpha-D-glucosamine + holo-[ACP] + H(+). Its pathway is bacterial outer membrane biogenesis; LPS lipid A biosynthesis. Functionally, catalyzes the N-acylation of UDP-3-O-acylglucosamine using 3-hydroxyacyl-ACP as the acyl donor. Is involved in the biosynthesis of lipid A, a phosphorylated glycolipid that anchors the lipopolysaccharide to the outer membrane of the cell. In Campylobacter concisus (strain 13826), this protein is UDP-3-O-acylglucosamine N-acyltransferase.